Reading from the N-terminus, the 267-residue chain is Phosphate import ATP-binding protein PstB (267 aa).

The region spanning 21-262 (VAARNLDFYY…PSKQQTEDYI (242 aa)) is the ABC transporter domain. 53–60 (GPSGCGKS) is an ATP binding site.

The protein belongs to the ABC transporter superfamily. Phosphate importer (TC 3.A.1.7) family. In terms of assembly, the complex is composed of two ATP-binding proteins (PstB), two transmembrane proteins (PstC and PstA) and a solute-binding protein (PstS).

The protein localises to the cell inner membrane. It catalyses the reaction phosphate(out) + ATP + H2O = ADP + 2 phosphate(in) + H(+). In terms of biological role, part of the ABC transporter complex PstSACB involved in phosphate import. Responsible for energy coupling to the transport system. This is Phosphate import ATP-binding protein PstB from Xanthomonas oryzae pv. oryzae (strain MAFF 311018).